The sequence spans 633 residues: Telomere-binding protein 1 (633 aa).

Residues 253–272 (HAADRDDDENSSGCVHPSTS) form a disordered region. A compositionally biased stretch (polar residues) spans 263–272 (SSGCVHPSTS). The Ubiquitin-like domain maps to 351-430 (VKLTIKSFNI…LNDIGFTLEC (80 aa)). The segment at 506-615 (PFADPNSLAL…RVLAAQAYWS (110 aa)) is sufficient for telomeric DNA binding. An HTH myb-type domain is found at 529–588 (GQRRIRRPFTVAEVELLVEAVEHLGTGRWRDVKFRAFENVHHRTYVDLKDKWKTLVHTAS). The 51-residue stretch at 534-584 (RRPFTVAEVELLVEAVEHLGTGRWRDVKFRAFENVHHRTYVDLKDKWKTLV) folds into the SANT domain. The segment at residues 557 to 584 (WRDVKFRAFENVHHRTYVDLKDKWKTLV) is a DNA-binding region (H-T-H motif).

In terms of assembly, homodimer. Ubiquitous.

Its subcellular location is the chromosome. The protein localises to the telomere. Its function is as follows. Binds the telomeric double-stranded 5'TTTAGGG-3' repeat and regulates telomere length and structure. The chain is Telomere-binding protein 1 (TBP1) from Oryza sativa subsp. japonica (Rice).